A 228-amino-acid polypeptide reads, in one-letter code: Cytochrome c oxidase subunit 2 (228 aa).

Residues 1 to 26 lie on the Mitochondrial intermembrane side of the membrane; sequence MSTWANLGLQDSASPLMEQLIFFHDH. A helical transmembrane segment spans residues 27–48; it reads ALLILVMITVLVGYLMFMLFFN. The Mitochondrial matrix portion of the chain corresponds to 49–62; that stretch reads NYVNRFLLHGQLIE. Residues 63-82 traverse the membrane as a helical segment; the sequence is MIWTILPAIILLFIALPSLR. At 83-228 the chain is on the mitochondrial intermembrane side; it reads LLYLLDEINE…FIKWISSNNS (146 aa). The Cu cation site is built by H161, C196, E198, C200, H204, and M207. E198 contacts Mg(2+).

It belongs to the cytochrome c oxidase subunit 2 family. As to quaternary structure, component of the cytochrome c oxidase (complex IV, CIV), a multisubunit enzyme composed of a catalytic core of 3 subunits and several supernumerary subunits. The complex exists as a monomer or a dimer and forms supercomplexes (SCs) in the inner mitochondrial membrane with ubiquinol-cytochrome c oxidoreductase (cytochrome b-c1 complex, complex III, CIII). It depends on Cu cation as a cofactor.

It is found in the mitochondrion inner membrane. The catalysed reaction is 4 Fe(II)-[cytochrome c] + O2 + 8 H(+)(in) = 4 Fe(III)-[cytochrome c] + 2 H2O + 4 H(+)(out). Functionally, component of the cytochrome c oxidase, the last enzyme in the mitochondrial electron transport chain which drives oxidative phosphorylation. The respiratory chain contains 3 multisubunit complexes succinate dehydrogenase (complex II, CII), ubiquinol-cytochrome c oxidoreductase (cytochrome b-c1 complex, complex III, CIII) and cytochrome c oxidase (complex IV, CIV), that cooperate to transfer electrons derived from NADH and succinate to molecular oxygen, creating an electrochemical gradient over the inner membrane that drives transmembrane transport and the ATP synthase. Cytochrome c oxidase is the component of the respiratory chain that catalyzes the reduction of oxygen to water. Electrons originating from reduced cytochrome c in the intermembrane space (IMS) are transferred via the dinuclear copper A center (CU(A)) of subunit 2 and heme A of subunit 1 to the active site in subunit 1, a binuclear center (BNC) formed by heme A3 and copper B (CU(B)). The BNC reduces molecular oxygen to 2 water molecules using 4 electrons from cytochrome c in the IMS and 4 protons from the mitochondrial matrix. In Drosophila melanogaster (Fruit fly), this protein is Cytochrome c oxidase subunit 2 (mt:CoII).